We begin with the raw amino-acid sequence, 512 residues long: MAGRGGSQLERRRERTPDRGRGSASHPPGRESPSPPPLPLKRHTYRRVVSDQEEEIVVVSENSRSPSPQEQPPPPQQPPKKKPRKTKHVPLQDVSQDSEDEREAEEELGAVGFSYPPVRITGKDGKRSFETLNENDPLTKAASAKMAVTNPLSLPIVSAWEKGMEIMNMLMERYRVESDLKSNFQLMPEQGEVYRRICHLYINEEHRGIPLTFTSNKTLTTMMGRFLQGFVHAHSQIAHKNWESTGCALWLHGCTEVEGKLRCLHGTTMIQKEHMIEMDVASENGQRALKENPDRAKVTQNRWGRSVVQLANNDARCCVHDAGCATNQFSSKSCGVFFTEGAKAQQAFKQLEAFMKAMYPGMNADQAQVMLIPLHCDCNHKPGCVPTMGRQTCKMTPFGMANAEDLDVDGITDATVLASVKHPALMVFQCCNPVYRNSRAQNAGPNCDFKISAPDLLGALQLTRKLWTDSFPDTLLPKLLIPEFKWLAKYQFRNVSLPAGHAETSRQNPFDF.

The disordered stretch occupies residues 1 to 105; it reads MAGRGGSQLE…QDSEDEREAE (105 aa). A compositionally biased stretch (basic and acidic residues) spans 9–21; sequence LERRRERTPDRGR. The segment covering 69–78 has biased composition (pro residues); that stretch reads QEQPPPPQQP. Basic residues predominate over residues 79–88; that stretch reads PKKKPRKTKH. A compositionally biased stretch (acidic residues) spans 96 to 105; that stretch reads QDSEDEREAE. Position 174 is a phosphotyrosine; by host (Tyr174). Zn(2+) contacts are provided by Cys263 and His265. The interval 276 to 310 is flexible loop; it reads IEMDVASENGQRALKENPDRAKVTQNRWGRSVVQL. The Zn(2+) site is built by Cys318, Cys334, Cys376, Cys378, Cys430, and Cys447. The segment at 495 to 512 is C-terminal arm, DBP binding; the sequence is VSLPAGHAETSRQNPFDF.

It belongs to the adenoviridae E2A DNA-binding protein family. In terms of assembly, homomultimerizes on viral ssDNA bound to pTP. Forms a initiation complex with viral polymerase, pTP and hosts NFIA and POU2F1/OCT1. Interacts with host SRCAP.

The protein localises to the host nucleus. Its function is as follows. Plays a role in the elongation phase of viral strand displacement replication by unwinding the template in an ATP-independent fashion, employing its capacity to form multimers. Also enhances the rate of initiation. Released from template upon second strand synthesis. Assembles in complex with viral pTP, viral pol, host NFIA and host POU2F1/OCT1 on viral origin of replication. Covers the whole ssDNA genome during synthesis. The complementary strand synthesis induces its relese from DNA template. May inhibit cellular transcription mediated by the interaction between host SRCAP and CBP. This is DNA-binding protein from Homo sapiens (Human).